A 492-amino-acid polypeptide reads, in one-letter code: MTLWINGDWVTGQGALRVKRNPVSGEVLWQGNDADAAQVGQACRAARAAFPRWARLSFGDRQVRVERFAGLLESNKAELTAIIARETGKPRWEAATEVTAMINKIAISIKAYHVRTGEQRSEMPDGAASLRHRPHGVLAVFGPYNFPGHLPNGHIVPALLAGNTIIFKPSELTPWSGEAVMRLWQQAGLPPGVLNLVQGGRETGQALSALEDLDGLLFTGSANTGYQLHRQLSGQPEKILALEMGGNNPLIIDEAADIDAAVHLTIQSAFVTAGQRCTCARRLLLKSGAQGDAFLARLVAVSQRLTPGRWDDEPQPFIGGLISEQAAQQVVTAWQQLETMGGRTLLAPRLLQAGTSLLTPGIIEMTGVTGVPDEEVFGPLLRVWRYDNFDEAIRMANNTRFGLSCGLVSPEREKFDQLLLEARAGIVNWNKPLTGAASTAPFGGIGASGNHRPSGWYAADYCAWPMASLESDSLTLPATLNPGLDFSDEVVR.

Residue 220-225 (GSANTG) coordinates NAD(+). Catalysis depends on residues glutamate 243 and cysteine 277.

It belongs to the aldehyde dehydrogenase family. AstD subfamily.

The enzyme catalyses N-succinyl-L-glutamate 5-semialdehyde + NAD(+) + H2O = N-succinyl-L-glutamate + NADH + 2 H(+). It participates in amino-acid degradation; L-arginine degradation via AST pathway; L-glutamate and succinate from L-arginine: step 4/5. Functionally, catalyzes the NAD-dependent reduction of succinylglutamate semialdehyde into succinylglutamate. The chain is N-succinylglutamate 5-semialdehyde dehydrogenase from Escherichia coli O7:K1 (strain IAI39 / ExPEC).